The sequence spans 476 residues: MSRLAPLSQCLHALRGTFERAIGQAQALDRPVLVAASFEIDPLDPLQVFGAWDDRQTPCLYWEQPELAFFAWGCALELQGHGEQRFARIEENWQLLCADAVVEGPLAPRLCGGFRFDPRGPREEHWQAFADASLMLAGITVLREGERYRVLCQHLAKPGEDALALAAYHCSALLRLRQPARRRPSGPTAGAQGDASAQERRQWEAKVSDAVSSVRQGRFGKVVLARTQARPLGDIEPWQVIEHLRLQHADAQLFACRRGNACFLGASPERLVRIRAGEALTHALAGTIARGGDAQEDARLGQALLDSAKDRHEHQLVVEAIRTALEPFSEVLEIPDAPGLKRLARVQHLNTPIRARLADAGGILRLLQALHPTPAVGGYPRSAALDYIRQHEGMDRGWYAAPLGWLDGEGNGDFLVALRSALLTPGRGYLFAGCGLVGDSEPAHEYRETCLKLSAMREALSAIGGLDEVPLQRGVA.

Residues 181-202 (RRRPSGPTAGAQGDASAQERRQ) are disordered.

Belongs to the isochorismate synthase family.

The catalysed reaction is chorismate = isochorismate. It participates in siderophore biosynthesis; salicylate biosynthesis. Functionally, involved in the conversion of chorismate to salicylate. This Pseudomonas aeruginosa (strain ATCC 15692 / DSM 22644 / CIP 104116 / JCM 14847 / LMG 12228 / 1C / PRS 101 / PAO1) protein is Salicylate biosynthesis isochorismate synthase (pchA).